Consider the following 269-residue polypeptide: tRNA pseudouridine synthase A (269 aa).

The active-site Nucleophile is Asp-51. Tyr-109 is a binding site for substrate.

Belongs to the tRNA pseudouridine synthase TruA family. In terms of assembly, homodimer.

It carries out the reaction uridine(38/39/40) in tRNA = pseudouridine(38/39/40) in tRNA. In terms of biological role, formation of pseudouridine at positions 38, 39 and 40 in the anticodon stem and loop of transfer RNAs. This Haemophilus influenzae (strain 86-028NP) protein is tRNA pseudouridine synthase A.